A 307-amino-acid polypeptide reads, in one-letter code: Bifunctional protein FolD (307 aa).

Residues 165–167, Ser190, and Ile231 contribute to the NADP(+) site; that span reads GRS.

This sequence belongs to the tetrahydrofolate dehydrogenase/cyclohydrolase family. As to quaternary structure, homodimer.

It catalyses the reaction (6R)-5,10-methylene-5,6,7,8-tetrahydrofolate + NADP(+) = (6R)-5,10-methenyltetrahydrofolate + NADPH. It carries out the reaction (6R)-5,10-methenyltetrahydrofolate + H2O = (6R)-10-formyltetrahydrofolate + H(+). It participates in one-carbon metabolism; tetrahydrofolate interconversion. Its function is as follows. Catalyzes the oxidation of 5,10-methylenetetrahydrofolate to 5,10-methenyltetrahydrofolate and then the hydrolysis of 5,10-methenyltetrahydrofolate to 10-formyltetrahydrofolate. In Koribacter versatilis (strain Ellin345), this protein is Bifunctional protein FolD.